A 605-amino-acid polypeptide reads, in one-letter code: Adaptin medium chain homolog APM2 (605 aa).

Residues E150 to K196 are disordered. The segment covering G155 to S171 has biased composition (low complexity). Residues N174–K196 show a composition bias toward basic residues. An MHD domain is found at K269–I604.

It belongs to the adaptor complexes medium subunit family. As to quaternary structure, component of the AP-1R complex composed of at least APM2, APL4 and APS1. Interacts with MIL1. Interacts with APL2.

Its subcellular location is the golgi apparatus membrane. It localises to the early endosome membrane. It is found in the cytoplasmic vesicle. The protein localises to the clathrin-coated vesicle membrane. Component of the AP-1-related (AP-1R) complex, an adapter protein complex that mediates of cargo protein sorting in clathrin-coated vesicles. AP-1R has a specific role in SNARE SNC1 sorting. In contrast to the APM1-containing AP-1 complex, AP-1R is incapable of sorting CHS3. The chain is Adaptin medium chain homolog APM2 (APM2) from Saccharomyces cerevisiae (strain ATCC 204508 / S288c) (Baker's yeast).